We begin with the raw amino-acid sequence, 243 residues long: Triosephosphate isomerase (243 aa).

Substrate is bound at residue 9-11 (NWK). H96 functions as the Electrophile in the catalytic mechanism. Catalysis depends on E165, which acts as the Proton acceptor. Substrate is bound by residues G171, S204, and 225–226 (GG).

This sequence belongs to the triosephosphate isomerase family. As to quaternary structure, homodimer.

The protein localises to the cytoplasm. The catalysed reaction is D-glyceraldehyde 3-phosphate = dihydroxyacetone phosphate. Its pathway is carbohydrate biosynthesis; gluconeogenesis. It functions in the pathway carbohydrate degradation; glycolysis; D-glyceraldehyde 3-phosphate from glycerone phosphate: step 1/1. Functionally, involved in the gluconeogenesis. Catalyzes stereospecifically the conversion of dihydroxyacetone phosphate (DHAP) to D-glyceraldehyde-3-phosphate (G3P). The sequence is that of Triosephosphate isomerase from Parasynechococcus marenigrum (strain WH8102).